An 883-amino-acid chain; its full sequence is Translation initiation factor IF-2 (883 aa).

The span at 32 to 45 (NDLNGKNNSNSSIN) shows a compositional bias: polar residues. Disordered stretches follow at residues 32-216 (NDLN…QNKY) and 251-275 (RKLG…AETE). Basic and acidic residues predominate over residues 46 to 62 (LDKHNNKVEYSQNRDNR). The span at 75-216 (GGYSQNRDNR…VGKNTSQNKY (142 aa)) shows a compositional bias: polar residues. Positions 251–260 (RKLGEKKKQQ) are enriched in basic and acidic residues. In terms of domain architecture, tr-type G spans 381–554 (EKPPVITIMG…DMMLLKANPS (174 aa)). The G1 stretch occupies residues 390–397 (GHVDHGKT). 390-397 (GHVDHGKT) is a binding site for GTP. The interval 415–419 (GITQH) is G2. Residues 436–439 (DTPG) are G3. GTP contacts are provided by residues 436-440 (DTPGH) and 490-493 (NKID). The G4 stretch occupies residues 490–493 (NKID). Positions 526 to 528 (SAL) are G5.

This sequence belongs to the TRAFAC class translation factor GTPase superfamily. Classic translation factor GTPase family. IF-2 subfamily.

The protein localises to the cytoplasm. One of the essential components for the initiation of protein synthesis. Protects formylmethionyl-tRNA from spontaneous hydrolysis and promotes its binding to the 30S ribosomal subunits. Also involved in the hydrolysis of GTP during the formation of the 70S ribosomal complex. This is Translation initiation factor IF-2 from Borrelia garinii subsp. bavariensis (strain ATCC BAA-2496 / DSM 23469 / PBi) (Borreliella bavariensis).